Consider the following 559-residue polypeptide: Germacrene A synthase (559 aa).

Residues aspartate 312, aspartate 316, aspartate 456, threonine 460, and glutamate 464 each contribute to the Mg(2+) site. The short motif at 312–316 (DDTYD) is the DDXXD motif element.

The protein belongs to the terpene synthase family. In terms of assembly, monomer. Mg(2+) is required as a cofactor. As to expression, expressed in glandular trichomes of all aerial tissues, with highest levels in tissues accumulating parthenolide (e.g. flowers and, to some extent, leaves).

The enzyme catalyses (2E,6E)-farnesyl diphosphate = (+)-(R)-germacrene A + diphosphate. It functions in the pathway secondary metabolite biosynthesis; terpenoid biosynthesis. Functionally, sesquiterpene synthase involved in germacrene A biosynthesis. Germacrene A is a precursor of several sesquiterpene lactones. This is Germacrene A synthase from Tanacetum parthenium (Feverfew).